We begin with the raw amino-acid sequence, 195 residues long: Glutamyl-tRNA(Gln) amidotransferase subunit C, mitochondrial (195 aa).

Residues Met-1 to Cys-18 constitute a mitochondrion transit peptide.

Belongs to the GatC family. In terms of assembly, subunit of the heterotrimeric GatCAB amidotransferase (AdT) complex, composed of A, B and C subunits.

It is found in the mitochondrion. It carries out the reaction L-glutamyl-tRNA(Gln) + L-glutamine + ATP + H2O = L-glutaminyl-tRNA(Gln) + L-glutamate + ADP + phosphate + H(+). In terms of biological role, allows the formation of correctly charged Gln-tRNA(Gln) through the transamidation of misacylated Glu-tRNA(Gln) in the mitochondria. The reaction takes place in the presence of glutamine and ATP through an activated gamma-phospho-Glu-tRNA(Gln). This Brugia malayi (Filarial nematode worm) protein is Glutamyl-tRNA(Gln) amidotransferase subunit C, mitochondrial.